A 448-amino-acid polypeptide reads, in one-letter code: Exodeoxyribonuclease 7 large subunit (448 aa).

The protein belongs to the XseA family. In terms of assembly, heterooligomer composed of large and small subunits.

The protein resides in the cytoplasm. The catalysed reaction is Exonucleolytic cleavage in either 5'- to 3'- or 3'- to 5'-direction to yield nucleoside 5'-phosphates.. Bidirectionally degrades single-stranded DNA into large acid-insoluble oligonucleotides, which are then degraded further into small acid-soluble oligonucleotides. In Exiguobacterium sp. (strain ATCC BAA-1283 / AT1b), this protein is Exodeoxyribonuclease 7 large subunit.